Consider the following 352-residue polypeptide: Phenylalanine--tRNA ligase alpha subunit (352 aa).

Glu258 lines the Mg(2+) pocket.

It belongs to the class-II aminoacyl-tRNA synthetase family. Phe-tRNA synthetase alpha subunit type 1 subfamily. As to quaternary structure, tetramer of two alpha and two beta subunits. The cofactor is Mg(2+).

The protein localises to the cytoplasm. It catalyses the reaction tRNA(Phe) + L-phenylalanine + ATP = L-phenylalanyl-tRNA(Phe) + AMP + diphosphate + H(+). In Staphylococcus aureus (strain bovine RF122 / ET3-1), this protein is Phenylalanine--tRNA ligase alpha subunit.